Consider the following 209-residue polypeptide: Thiamine-phosphate synthase (209 aa).

4-amino-2-methyl-5-(diphosphooxymethyl)pyrimidine-binding positions include Q39–K43 and N71. Positions 72 and 91 each coordinate Mg(2+). S110 contacts 4-amino-2-methyl-5-(diphosphooxymethyl)pyrimidine. Residue T136 to T138 coordinates 2-[(2R,5Z)-2-carboxy-4-methylthiazol-5(2H)-ylidene]ethyl phosphate. K139 contacts 4-amino-2-methyl-5-(diphosphooxymethyl)pyrimidine. Residues G166 and V186–S187 each bind 2-[(2R,5Z)-2-carboxy-4-methylthiazol-5(2H)-ylidene]ethyl phosphate.

Belongs to the thiamine-phosphate synthase family. Requires Mg(2+) as cofactor.

The enzyme catalyses 2-[(2R,5Z)-2-carboxy-4-methylthiazol-5(2H)-ylidene]ethyl phosphate + 4-amino-2-methyl-5-(diphosphooxymethyl)pyrimidine + 2 H(+) = thiamine phosphate + CO2 + diphosphate. The catalysed reaction is 2-(2-carboxy-4-methylthiazol-5-yl)ethyl phosphate + 4-amino-2-methyl-5-(diphosphooxymethyl)pyrimidine + 2 H(+) = thiamine phosphate + CO2 + diphosphate. It carries out the reaction 4-methyl-5-(2-phosphooxyethyl)-thiazole + 4-amino-2-methyl-5-(diphosphooxymethyl)pyrimidine + H(+) = thiamine phosphate + diphosphate. Its pathway is cofactor biosynthesis; thiamine diphosphate biosynthesis; thiamine phosphate from 4-amino-2-methyl-5-diphosphomethylpyrimidine and 4-methyl-5-(2-phosphoethyl)-thiazole: step 1/1. Its function is as follows. Condenses 4-methyl-5-(beta-hydroxyethyl)thiazole monophosphate (THZ-P) and 2-methyl-4-amino-5-hydroxymethyl pyrimidine pyrophosphate (HMP-PP) to form thiamine monophosphate (TMP). The protein is Thiamine-phosphate synthase of Clostridium beijerinckii (strain ATCC 51743 / NCIMB 8052) (Clostridium acetobutylicum).